The sequence spans 745 residues: DEAD-box ATP-dependent RNA helicase 3A, chloroplastic (745 aa).

The transit peptide at 1-41 (MASLVTLPAIAFSNPATASGAVRLRAAAFRCWALRRRGWAV) directs the protein to the chloroplast. The short motif at 88–116 (LAIARLGLPDELVATLEKRGITHLFPIQR) is the Q motif element. Residues 119 to 295 (LIPALGGRDL…RRYLNNPLTI (177 aa)) form the Helicase ATP-binding domain. Residue 132–139 (AKTGTGKT) participates in ATP binding. The DEAD box motif lies at 243–246 (DEAD). Positions 324 to 469 (ILSDLITVYA…ISPPSIEEVL (146 aa)) constitute a Helicase C-terminal domain. Residues 606–724 (LTKISKLPAL…SLGGRESSRS (119 aa)) are disordered. Positions 641–650 (GGGASRGRGG) are enriched in gly residues. Basic and acidic residues predominate over residues 656–670 (EDRYRRGGRSLRSDN). Low complexity predominate over residues 687-724 (RSSSSFGGRSSSYGSRGSPSPSFGVRSSSLGGRESSRS). The CCHC-type zinc-finger motif lies at 727-744 (GACFNCGESGHRASDCPN).

Belongs to the DEAD box helicase family. DDX21/DDX50 subfamily.

It is found in the plastid. Its subcellular location is the chloroplast. The enzyme catalyses ATP + H2O = ADP + phosphate + H(+). In terms of biological role, nuclear genome-encoded factor involved in ribosome biogenesis in chloroplasts. Binds specific group II introns in chloroplasts and facilitates their splicing. Required for normal development of chloroplasts. This Zea mays (Maize) protein is DEAD-box ATP-dependent RNA helicase 3A, chloroplastic.